Reading from the N-terminus, the 611-residue chain is Actin-binding LIM protein 2 (611 aa).

LIM zinc-binding domains lie at 22-81, 81-141, 151-210, and 210-270; these read ILCN…LYGT, TRCF…VSVG, RSCG…KFGI, and IRCD…ARTE. Positions 83, 86, 103, 106, 109, 112, 131, and 134 each coordinate Zn(2+). C212, C215, H232, C235, C238, C241, H260, and C263 together coordinate Zn(2+). Residues 269 to 278 show a composition bias toward basic and acidic residues; it reads TEDRNKETRT. 2 disordered regions span residues 269–295 and 336–527; these read TEDRNKETRTSSESIISVPASSTSGSP and YISH…DQRN. 2 stretches are compositionally biased toward low complexity: residues 279–295 and 363–372; these read SSESIISVPASSTSGSP and SSPSSTGSVS. Phosphoserine occurs at positions 282, 294, 364, and 367. Residues 393 to 404 show a composition bias toward polar residues; the sequence is SGRSTPSLSVLS. S452 is subject to Phosphoserine. T472 is subject to Phosphothreonine. Polar residues predominate over residues 473–488; the sequence is RTNSPDLDTQSLSHSS. S476 and S578 each carry phosphoserine. One can recognise an HP domain in the interval 543-611; the sequence is MREYKIYPYD…NDLKKKALLF (69 aa).

In terms of assembly, interacts with F-actin and ABRA. As to expression, highly expressed in skeletal muscle.

The protein resides in the cytoplasm. Functionally, may act as scaffold protein. May stimulate ABRA activity and ABRA-dependent SRF transcriptional activity. The protein is Actin-binding LIM protein 2 (ABLIM2) of Homo sapiens (Human).